A 529-amino-acid polypeptide reads, in one-letter code: Non-reducing end alpha-L-arabinofuranosidase BoGH43B (529 aa).

The N-terminal stretch at 1 to 23 is a signal peptide; sequence MMKNSCRLLLILIGLWMANVSLA. The active-site Proton acceptor is Asp-38. The active-site Proton donor is Glu-198.

This sequence belongs to the glycosyl hydrolase 43 family.

The protein resides in the periplasm. It catalyses the reaction Hydrolysis of terminal non-reducing alpha-L-arabinofuranoside residues in alpha-L-arabinosides.. It functions in the pathway glucan metabolism; xyloglucan degradation. Alpha-L-arabinofuranosidase involved in xyloglucan degradation by mediating the cleavage of terminal non-reducing alpha-L-arabinofuranoside residues in xyloglucan branches, converting the 'S' units to 'X' units. In Bacteroides ovatus (strain ATCC 8483 / DSM 1896 / JCM 5824 / BCRC 10623 / CCUG 4943 / NCTC 11153), this protein is Non-reducing end alpha-L-arabinofuranosidase BoGH43B.